The chain runs to 2068 residues: uncharacterized protein (2068 aa).

Transmembrane regions (helical) follow at residues 3–23 and 51–71; these read FFII…NFCS and TIYL…YYYI. The segment covering 975–998 has biased composition (basic and acidic residues); it reads QMHSGEDEKEELGEPKEKGSKSCQ. Positions 975 to 1030 are disordered; it reads QMHSGEDEKEELGEPKEKGSKSCQEEEEQDEEEEDEDEEEEEDQGVNNYDNYVDGV. The span at 999–1018 shows a compositional bias: acidic residues; the sequence is EEEEQDEEEEDEDEEEEEDQ. The helical transmembrane segment at 1890 to 1910 threads the bilayer; it reads FLYNLSFIYNVYNYLILIYIY.

It is found in the membrane. This is an uncharacterized protein from Plasmodium falciparum (isolate 3D7).